The chain runs to 130 residues: RutC family protein HI_0719 (130 aa).

The active site involves Cys-109.

The protein belongs to the RutC family. As to quaternary structure, homotrimer.

The polypeptide is RutC family protein HI_0719 (Haemophilus influenzae (strain ATCC 51907 / DSM 11121 / KW20 / Rd)).